The primary structure comprises 206 residues: Small ribosomal subunit protein uS4 (206 aa).

Positions 96-157 (GRLDNVVYRM…KAKKQSRVRA (62 aa)) constitute an S4 RNA-binding domain.

This sequence belongs to the universal ribosomal protein uS4 family. In terms of assembly, part of the 30S ribosomal subunit. Contacts protein S5. The interaction surface between S4 and S5 is involved in control of translational fidelity.

Its function is as follows. One of the primary rRNA binding proteins, it binds directly to 16S rRNA where it nucleates assembly of the body of the 30S subunit. Functionally, with S5 and S12 plays an important role in translational accuracy. The sequence is that of Small ribosomal subunit protein uS4 from Sodalis glossinidius (strain morsitans).